A 168-amino-acid polypeptide reads, in one-letter code: MFFANIEKHSNFTYYILFFKFCKIRGELVTYKEKLLEKYPDLIYEITWTKEKDDSFLQITLNENNLEKITEYSKEISNILDNYEKELPSKYFLDISSRGINLSIQKENLDNYLEKYIEISLVNETKKIKGILWEIKNETIILKVNFKGQFRKIEYKKNNINLIEEVIK.

This sequence belongs to the RimP family.

The protein localises to the cytoplasm. Required for maturation of 30S ribosomal subunits. This chain is Ribosome maturation factor RimP, found in Mycoplasma mobile (strain ATCC 43663 / 163K / NCTC 11711) (Mesomycoplasma mobile).